The chain runs to 319 residues: MTYARIQGVGSYIPQQILSNADLEKMVNTTDEWIMQRVGVRERHVIANSPDNTTTMAVDAAKRAIEMAGIDPAVIDMIIVGTATAEYYFPSTACLVQKHLNLREDIPAFDINAACAGFVYALSIADQYIRNEGAKHILVIGVDSLTKVVDWKDRSTCILFGDGAGAVILQAHKEPGILNTILHANGDYSDLITAKSGVWERESVPHLHMYGKEVFKLAVTKLGEIVDEIIEKSGLKQSGIDWLIPHQANLRIIEATAKRLGLPRERVILTIEQHGNTSAASIPLALDAAVRAGKIKRGDTLLLEAFGAGLAWGAALLKL.

Catalysis depends on residues Cys-115 and His-246. The ACP-binding stretch occupies residues 247–251 (QANLR). Residue Asn-276 is part of the active site.

It belongs to the thiolase-like superfamily. FabH family. Homodimer.

It localises to the cytoplasm. It catalyses the reaction malonyl-[ACP] + acetyl-CoA + H(+) = 3-oxobutanoyl-[ACP] + CO2 + CoA. It functions in the pathway lipid metabolism; fatty acid biosynthesis. In terms of biological role, catalyzes the condensation reaction of fatty acid synthesis by the addition to an acyl acceptor of two carbons from malonyl-ACP. Catalyzes the first condensation reaction which initiates fatty acid synthesis and may therefore play a role in governing the total rate of fatty acid production. Possesses both acetoacetyl-ACP synthase and acetyl transacylase activities. Its substrate specificity determines the biosynthesis of branched-chain and/or straight-chain of fatty acids. The polypeptide is Beta-ketoacyl-[acyl-carrier-protein] synthase III (Coxiella burnetii (strain RSA 331 / Henzerling II)).